A 150-amino-acid polypeptide reads, in one-letter code: FAD synthase (150 aa).

ATP-binding positions include 11-12 (TF), 16-19 (HPGH), D96, and Y124.

This sequence belongs to the archaeal FAD synthase family. Homodimer. A divalent metal cation is required as a cofactor.

It catalyses the reaction FMN + ATP + H(+) = FAD + diphosphate. It functions in the pathway cofactor biosynthesis; FAD biosynthesis; FAD from FMN: step 1/1. In terms of biological role, catalyzes the transfer of the AMP portion of ATP to flavin mononucleotide (FMN) to produce flavin adenine dinucleotide (FAD) coenzyme. In Methanococcus maripaludis (strain C7 / ATCC BAA-1331), this protein is FAD synthase.